The following is a 660-amino-acid chain: Arginine--tRNA ligase, cytoplasmic (660 aa).

Met-1 bears the N-acetylmethionine mark. Residues 1-72 are could be involved in the assembly of the multisynthetase complex; sequence MDGLVAQCSA…QAERKRPTKN (72 aa). L-arginine-binding positions include 200-202, His-211, Tyr-384, Asp-388, and Gln-412; that span reads SPN. Residues 201–212 carry the 'HIGH' region motif; the sequence is PNIAKEMHVGHL. Residues 529–543 are interaction with tRNA; sequence NTAAYLLYAFTRIRS.

This sequence belongs to the class-I aminoacyl-tRNA synthetase family. In terms of assembly, interacts (via N-terminus) with AIMP1 (via N-terminus); this stimulates its catalytic activity. Interacts (via N-terminus) with LARS2 (via C-terminus). Monomer. Part of a multisubunit complex that groups tRNA ligases for Arg (RARS1), Asp (DARS1), Gln (QARS1), Ile (IARS1), Leu (LARS1), Lys (KARS1), Met (MARS1) the bifunctional ligase for Glu and Pro (EPRS1) and the auxiliary subunits AIMP1/p43, AIMP2/p38 and EEF1E1/p18. Interacts with QARS1. Part of a complex composed of RARS1, QARS1 and AIMP1. As to expression, detected in dorsal root ganglion.

The protein resides in the cytoplasm. Its subcellular location is the cytosol. It catalyses the reaction tRNA(Arg) + L-arginine + ATP = L-arginyl-tRNA(Arg) + AMP + diphosphate. Functionally, forms part of a macromolecular complex that catalyzes the attachment of specific amino acids to cognate tRNAs during protein synthesis. Modulates the secretion of AIMP1 and may be involved in generation of the inflammatory cytokine EMAP2 from AIMP1. This Rattus norvegicus (Rat) protein is Arginine--tRNA ligase, cytoplasmic (Rars1).